A 283-amino-acid chain; its full sequence is Glutamate racemase (283 aa).

Residues 28-29 and 60-61 contribute to the substrate site; these read DS and YG. Cys92 serves as the catalytic Proton donor/acceptor. 93–94 is a binding site for substrate; that stretch reads NT. Residue Cys204 is the Proton donor/acceptor of the active site. A substrate-binding site is contributed by 205–206; that stretch reads TH.

This sequence belongs to the aspartate/glutamate racemases family.

It catalyses the reaction L-glutamate = D-glutamate. It participates in cell wall biogenesis; peptidoglycan biosynthesis. In terms of biological role, provides the (R)-glutamate required for cell wall biosynthesis. The chain is Glutamate racemase from Salmonella gallinarum (strain 287/91 / NCTC 13346).